A 109-amino-acid polypeptide reads, in one-letter code: MSAQPVDLQIFGRSLRVNCPPEQRDALNQAAEDLNQRLQDLKERTRVTNTEQLVFIAALNISYELTQEKAKTRDYASSMEQRIRMLQQTIEQALLEQGRISEKPGSKFE.

The stretch at 21–99 (PEQRDALNQA…IEQALLEQGR (79 aa)) forms a coiled coil.

It belongs to the ZapA family. Type 1 subfamily. As to quaternary structure, homodimer. Interacts with FtsZ.

It is found in the cytoplasm. Activator of cell division through the inhibition of FtsZ GTPase activity, therefore promoting FtsZ assembly into bundles of protofilaments necessary for the formation of the division Z ring. It is recruited early at mid-cell but it is not essential for cell division. In Klebsiella pneumoniae subsp. pneumoniae (strain ATCC 700721 / MGH 78578), this protein is Cell division protein ZapA.